We begin with the raw amino-acid sequence, 210 residues long: Flagellar transcriptional regulator FlhC (210 aa).

Positions 144, 147, 164, and 167 each coordinate Zn(2+).

The protein belongs to the FlhC family. In terms of assembly, heterohexamer composed of two FlhC and four FlhD subunits. Each FlhC binds a FlhD dimer, forming a heterotrimer, and a hexamer assembles by dimerization of two heterotrimers. Zn(2+) serves as cofactor.

The protein localises to the cytoplasm. In terms of biological role, functions in complex with FlhD as a master transcriptional regulator that regulates transcription of several flagellar and non-flagellar operons by binding to their promoter region. Activates expression of class 2 flagellar genes, including fliA, which is a flagellum-specific sigma factor that turns on the class 3 genes. Also regulates genes whose products function in a variety of physiological pathways. The chain is Flagellar transcriptional regulator FlhC from Cupriavidus pinatubonensis (strain JMP 134 / LMG 1197) (Cupriavidus necator (strain JMP 134)).